Reading from the N-terminus, the 439-residue chain is Protease Do-like 1, chloroplastic (439 aa).

Residues 154–323 (QGSGSGFVWD…IPVDTVGGIV (170 aa)) are serine protease. Catalysis depends on charge relay system residues His173, Asp203, and Ser282. The region spanning 326–423 (LVRFGKVTRP…EVTVEVLRGD (98 aa)) is the PDZ domain.

This sequence belongs to the peptidase S1C family. In terms of assembly, interacts with PTAC16 and other potential targets for degradation under high light conditions.

It is found in the plastid. The protein localises to the chloroplast thylakoid membrane. Its activity is regulated as follows. Inhibited by phenylmethylsulfonyl fluoride and O-phenanthroline. Its function is as follows. Serine protease that is required at high temperature. May be involved in the degradation of damaged proteins. In vivo, can degrade beta-casein. This Arabidopsis thaliana (Mouse-ear cress) protein is Protease Do-like 1, chloroplastic (DEGP1).